The sequence spans 641 residues: uncharacterized protein (641 aa).

Ser112 is subject to Phosphoserine. 4 disordered regions span residues 118-243, 261-289, 355-386, and 404-430; these read STSI…LDPT, KSPRPIQSTRVGLRTHSRQASSAGDTVSI, DKSDGDQREEDCVREGISVRSSSPTSPTRLEA, and DGEGLTTESDVSEPPGTSSSAAVQSHS. The segment covering 132-162 has biased composition (polar residues); the sequence is ASVSSQYPHRTFQKQVNKTCVSKSDGPSGNG. A Phosphoserine modification is found at Ser198. Composition is skewed to polar residues over residues 222-234 and 278-289; these read NQELPGSSVSRSN and RQASSAGDTVSI. A compositionally biased stretch (basic and acidic residues) spans 355-368; sequence DKSDGDQREEDCVR. 2 stretches are compositionally biased toward low complexity: residues 374 to 383 and 421 to 430; these read RSSSPTSPTR and SSSAAVQSHS.

This is an uncharacterized protein from Mus musculus (Mouse).